The primary structure comprises 62 residues: Photosystem II reaction center protein Z (62 aa).

2 consecutive transmembrane segments (helical) span residues 8-28 (AVFA…VVFA) and 41-61 (FSGT…NSLI).

It belongs to the PsbZ family. In terms of assembly, PSII is composed of 1 copy each of membrane proteins PsbA, PsbB, PsbC, PsbD, PsbE, PsbF, PsbH, PsbI, PsbJ, PsbK, PsbL, PsbM, PsbT, PsbY, PsbZ, Psb30/Ycf12, at least 3 peripheral proteins of the oxygen-evolving complex and a large number of cofactors. It forms dimeric complexes.

It localises to the plastid. Its subcellular location is the chloroplast thylakoid membrane. Functionally, may control the interaction of photosystem II (PSII) cores with the light-harvesting antenna, regulates electron flow through the 2 photosystem reaction centers. PSII is a light-driven water plastoquinone oxidoreductase, using light energy to abstract electrons from H(2)O, generating a proton gradient subsequently used for ATP formation. The protein is Photosystem II reaction center protein Z of Nymphaea alba (White water-lily).